Consider the following 365-residue polypeptide: Protein SGT1 homolog (365 aa).

Ala-2 carries the N-acetylalanine modification. 3 TPR repeats span residues 11-44 (SQRFFQSFSDALIDEDPQAALEELTKALEQKPDD), 45-78 (AQYYCQRAYCHILLGNYCVAVADAKKSLELNPNN), and 79-112 (STAMLRKGICEYHEKNYAAALETFTEGQKLDIET). The CS domain maps to 169 to 258 (QSKIKYDWYQ…PEAVRWEKLE (90 aa)). Position 265 is a phosphothreonine (Thr-265). Positions 276–365 (LYPSSSPYTR…PPDDMEWKKY (90 aa)) constitute an SGS domain. Position 281 is a phosphoserine (Ser-281). At Thr-284 the chain carries Phosphothreonine. Lys-295 participates in a covalent cross-link: Glycyl lysine isopeptide (Lys-Gly) (interchain with G-Cter in SUMO1); alternate. A Glycyl lysine isopeptide (Lys-Gly) (interchain with G-Cter in SUMO2); alternate cross-link involves residue Lys-295. Ser-331 carries the phosphoserine modification.

It belongs to the SGT1 family. As to quaternary structure, probably associates with SCF (SKP1-CUL1-F-box protein) complex through interaction with SKP1. Interacts with S100A6. Interacts with HSP90. In terms of processing, phosphorylated at Ser-281 and Ser-331, dephosphorylation promotes nuclear translocation, most likely due to disruption of the SUGT1-HSP90 complex.

It localises to the cytoplasm. The protein resides in the nucleus. In terms of biological role, may play a role in ubiquitination and subsequent proteasomal degradation of target proteins. The sequence is that of Protein SGT1 homolog from Homo sapiens (Human).